A 207-amino-acid chain; its full sequence is Large ribosomal subunit protein uL4 (207 aa).

Positions 44–76 are disordered; the sequence is KRRGTASAKTRSEVRGGGRKPWRQKGTGRARHG. Over residues 60-76 the composition is skewed to basic residues; the sequence is GGRKPWRQKGTGRARHG.

Belongs to the universal ribosomal protein uL4 family. In terms of assembly, part of the 50S ribosomal subunit.

Its function is as follows. One of the primary rRNA binding proteins, this protein initially binds near the 5'-end of the 23S rRNA. It is important during the early stages of 50S assembly. It makes multiple contacts with different domains of the 23S rRNA in the assembled 50S subunit and ribosome. In terms of biological role, forms part of the polypeptide exit tunnel. This is Large ribosomal subunit protein uL4 from Natranaerobius thermophilus (strain ATCC BAA-1301 / DSM 18059 / JW/NM-WN-LF).